A 417-amino-acid polypeptide reads, in one-letter code: Gamma-glutamyl phosphate reductase (417 aa).

Belongs to the gamma-glutamyl phosphate reductase family.

Its subcellular location is the cytoplasm. The catalysed reaction is L-glutamate 5-semialdehyde + phosphate + NADP(+) = L-glutamyl 5-phosphate + NADPH + H(+). It functions in the pathway amino-acid biosynthesis; L-proline biosynthesis; L-glutamate 5-semialdehyde from L-glutamate: step 2/2. Catalyzes the NADPH-dependent reduction of L-glutamate 5-phosphate into L-glutamate 5-semialdehyde and phosphate. The product spontaneously undergoes cyclization to form 1-pyrroline-5-carboxylate. The sequence is that of Gamma-glutamyl phosphate reductase from Shigella flexneri serotype 5b (strain 8401).